Consider the following 919-residue polypeptide: Transcriptional regulatory protein EDS1 (919 aa).

The tract at residues 1–54 is disordered; the sequence is MSHHVPNLYGTPIRDPHEHKRNSASMGEVNQSVSSRNCERGSEKGTKQRKKASR. Positions 23 to 36 are enriched in polar residues; it reads SASMGEVNQSVSSR. Residues 37–46 are compositionally biased toward basic and acidic residues; sequence NCERGSEKGT. The zn(2)-C6 fungal-type DNA-binding region spans 56 to 85; the sequence is CDQCRRKRIKCRFDKHTGVCQGCLEVGEKC. The disordered stretch occupies residues 297 to 338; that stretch reads AGCPNKKLGTDGRSDKWDKNSTWKPVYRSSNPSHPSTEKNVS. Residues 304–317 show a composition bias toward basic and acidic residues; that stretch reads LGTDGRSDKWDKNS. Over residues 318–338 the composition is skewed to polar residues; sequence TWKPVYRSSNPSHPSTEKNVS.

Binds DNA in a sequence-specific manner.

Its subcellular location is the nucleus. In Saccharomyces cerevisiae (strain Lalvin EC1118 / Prise de mousse) (Baker's yeast), this protein is Transcriptional regulatory protein EDS1 (EDS1).